The chain runs to 832 residues: Sodium/hydrogen exchanger 3 (832 aa).

A signal peptide spans 1–29; it reads MGRNRSGCVARCVSLTALVLLLCCPVVRS. Topologically, residues 30-66 are extracellular; it reads SEAETDPDSHTEHGDSHGGSREGNDTGFQIVTFRWEH. The tract at residues 31–51 is disordered; that stretch reads EAETDPDSHTEHGDSHGGSRE. Over residues 36–51 the composition is skewed to basic and acidic residues; the sequence is PDSHTEHGDSHGGSRE. The chain crosses the membrane as a helical span at residues 67 to 89; that stretch reads VQTPYVIALWILVASLGKIVFHL. The Cytoplasmic segment spans residues 90–97; it reads SEKVTSVV. A helical transmembrane segment spans residues 98–117; the sequence is PESALLIVLGLILGGIVWAA. At 118–126 the chain is on the extracellular side; sequence DHSASFTLT. The helical transmembrane segment at 127 to 144 threads the bilayer; sequence PTVFFFYLLPPIVLDAGY. At 145–147 the chain is on the cytoplasmic side; that stretch reads FMP. A helical transmembrane segment spans residues 148 to 183; that stretch reads NRHFFGNLGTILTYAVIGTVWNAATTGLSLYGVFLL. 3 residues coordinate a 1,2-diacyl-sn-glycero-3-phospho-(1D-myo-inositol): G153, G156, and T157. Residues 184–196 are Extracellular-facing; sequence GLMGDLKAGLLEF. The helical transmembrane segment at 197–218 threads the bilayer; the sequence is LLFGSLIAAVDPVAVLAVFEEV. At 219-220 the chain is on the cytoplasmic side; it reads HV. The helical transmembrane segment at 221 to 252 threads the bilayer; sequence NEVLFIIVFGESLLNDAVTVVLYNVFNSFVEV. The Extracellular portion of the chain corresponds to 253-259; sequence GAGNVQG. Residues 260 to 294 traverse the membrane as a helical segment; sequence LDYFKGIVSFFVVSLGGTAVGIIFAFILSLVTRFT. The Cytoplasmic segment spans residues 295 to 296; it reads KH. A helical transmembrane segment spans residues 297-319; sequence VRVIEPGFVFVISYLSYLTADML. Over 320 to 321 the chain is Extracellular; that stretch reads SL. Residues 322-338 form a helical membrane-spanning segment; sequence SAILAITFCGICCQKYV. At 339-345 the chain is on the cytoplasmic side; the sequence is KANLCEQ. A helical membrane pass occupies residues 346–374; the sequence is SITTVRYAMKMLASGAETIIFMFLGISAV. At 375 to 382 the chain is on the extracellular side; sequence NPTIWTWN. Residues 383 to 404 form a helical membrane-spanning segment; sequence TAFILLTLVFISVYRVIGVVIQ. Residues 405 to 417 are Cytoplasmic-facing; that stretch reads TWILNHYRVVQLE. A helical membrane pass occupies residues 418-441; that stretch reads IIDQVVMSYGGLRGAVAFALVVLL. At 442–448 the chain is on the extracellular side; it reads DSNYVGE. The helical transmembrane segment at 449–482 threads the bilayer; sequence RRLFVSTTIIVVYFTVIFQGLTIKPLVKWLKVKR. Over 483-832 the chain is Cytoplasmic; sequence SQHKEPLLNE…PLSFLPESSM (350 aa). Residues Q512, I513, and H515 each contribute to the a 1,2-diacyl-sn-glycero-3-phospho-(1D-myo-inositol) site. Residues 740–760 are disordered; sequence TPASNDADETGTGIDNPSFSN.

This sequence belongs to the monovalent cation:proton antiporter 1 (CPA1) transporter (TC 2.A.36) family. In terms of assembly, homodimer. In terms of tissue distribution, detected in early distal renal tubules in the kidney bundle zone, in proximal and late distal tubules in the kidney sinus zone, in absorptive epithelial cells of the intestine and in rectal epithelium (at protein level). Isoform 1 is expressed strongly in the gills, at intermediate levels in the kidney, spleen, rectum, spiral intestine and skin, and weakly in the brain, blood and rectal gland. Isoform 2 is expressed strongly in the kidney, rectum and spiral intestine, and weakly in muscles and the rectal gland.

The protein resides in the apical cell membrane. It localises to the cell membrane. Its subcellular location is the recycling endosome membrane. It is found in the early endosome membrane. The enzyme catalyses Na(+)(in) + H(+)(out) = Na(+)(out) + H(+)(in). With respect to regulation, seems to switch between active and inactive modes in response to various stimuli. Activated directly or indirectly by membrane phosphatidylinositol (PIs). Regulated by a variety of auxiliary proteins, which facilitate the maturation, cell surface expression and function of the transporter. Inhibited specifically by the drug tenapanor. Functionally, plasma membrane Na(+)/H(+) antiporter. Exchanges intracellular H(+) ions for extracellular Na(+) in 1:1 stoichiometry, playing a key role in salt and fluid absorption and pH homeostasis. Major apical Na(+)/H(+) exchanger in kidney and intestine playing an important role in renal and intestine Na(+) absorption and blood pressure regulation. This Triakis scyllium (Banded houndshark) protein is Sodium/hydrogen exchanger 3.